A 418-amino-acid chain; its full sequence is Ankyrin repeat domain-containing protein 61 (418 aa).

8 ANK repeats span residues 27–57 (ALHS…NQPL), 74–103 (QPIF…DPEV), 131–160 (TRIQ…QVNA), 166–195 (NKHS…QVNA), 199–228 (SSMT…NVNC), 233–272 (TGNT…QVNA), 276–305 (EGQT…NVNI), and 309–342 (NGES…PLRL).

This chain is Ankyrin repeat domain-containing protein 61 (Ankrd61), found in Rattus norvegicus (Rat).